Here is a 274-residue protein sequence, read N- to C-terminus: Protein TIFY 11A (274 aa).

Disordered regions lie at residues 49-95 (SLAL…SQPG) and 139-176 (PINDENNNNKSSMVLPDLNEPTDNNHLTKEQQQQQEQN). In terms of domain architecture, Tify spans 92 to 127 (SQPGSSQLTIFFGGKVLVYNEFPVDKAKEIMEVAKQ). Polar residues predominate over residues 139–150 (PINDENNNNKSS). A coiled-coil region spans residues 161–185 (DNNHLTKEQQQQQEQNQIVERIARR). The Jas signature appears at 182-206 (IARRASLHRFFAKRKDRAVARAPYQ). Residues 183-190 (ARRASLHR) carry the Nuclear localization signal motif. Residues 206 to 274 (QVNQNAGHHR…QSSKDLDLRL (69 aa)) are disordered. The span at 249–274 (IKSDGDKDDIMKIEEGQSSKDLDLRL) shows a compositional bias: basic and acidic residues.

The protein belongs to the TIFY/JAZ family. Homo- and heterodimer. Interacts with MYC2, MYC3, MYC4, AFPH2/NINJA, TIFY10A/JAZ1, TIFY10B/JAZ2, TIFY11B/JAZ6, TIFY5A/JAZ8 and TIFY3B/JAZ12. In terms of assembly, (Microbial infection) Interacts with the pathogenic Pseudomonas syringae HopZ1a protein. (Microbial infection) Acetylated by Pseudomonas syringae HopZ1a. Post-translationally, ubiquitinated. Targeted for degradation by the SCF(COI1) E3 ubiquitin ligase-proteasome pathway during jasmonate signaling.

It localises to the nucleus. Functionally, repressor of jasmonate responses. The protein is Protein TIFY 11A of Arabidopsis thaliana (Mouse-ear cress).